A 198-amino-acid chain; its full sequence is MMGHGDIDQLITMLARLPGLGPRSARRAALALLRQPESRMLPLAHLMERAATRVKTCSLCGNLDTVDPCHICTDAGRDRGLICVVETVGDLWALERAGVHRGVYQVLGGTLSALAGLGPDDLNVRPLFERIEEGGVREVILALSATVEGATTAHWLQERLLPTGVTVTRVGHGVPMGGALDVLDDGTLAAALTARRSL.

Residues 57-72 (CSLCGNLDTVDPCHIC) form a C4-type zinc finger. In terms of domain architecture, Toprim spans 80 to 175 (GLICVVETVG…TVTRVGHGVP (96 aa)).

Belongs to the RecR family.

May play a role in DNA repair. It seems to be involved in an RecBC-independent recombinational process of DNA repair. It may act with RecF and RecO. This Gluconobacter oxydans (strain 621H) (Gluconobacter suboxydans) protein is Recombination protein RecR.